The following is a 738-amino-acid chain: 1,4-alpha-glucan branching enzyme GlgB (738 aa).

D417 acts as the Nucleophile in catalysis. Catalysis depends on E472, which acts as the Proton donor.

This sequence belongs to the glycosyl hydrolase 13 family. GlgB subfamily. As to quaternary structure, monomer.

It carries out the reaction Transfers a segment of a (1-&gt;4)-alpha-D-glucan chain to a primary hydroxy group in a similar glucan chain.. The protein operates within glycan biosynthesis; glycogen biosynthesis. Functionally, catalyzes the formation of the alpha-1,6-glucosidic linkages in glycogen by scission of a 1,4-alpha-linked oligosaccharide from growing alpha-1,4-glucan chains and the subsequent attachment of the oligosaccharide to the alpha-1,6 position. This chain is 1,4-alpha-glucan branching enzyme GlgB, found in Burkholderia pseudomallei (strain K96243).